The sequence spans 304 residues: MLNKQNKLYLQAQAYWDFLRIEKQVSPHTLTNYQRQLLAISEMLIAAQIDDWQAVDASVVRWILTQSHKQGLGAKSIGLRLVVLRQWFAYLVQRHYVKVNPAVGIKAPKVARHLPKNIDAERMGQLLDVEVDEPADIRDLAMMELMYSSGLRLAELQRLDLGDMDLIDAEVRLLGKGNKERIVPIGSRALTALQAWLTVRPSFNPQDNALFLNKRGGRLSHRSIQLAMQKWGERQGLATRLHPHKLRHSFATHLLEASTDLRAVQELLGHSSLSTTQIYTHLDFQHLAKIYDASHPRARRKRED.

The Core-binding (CB) domain maps to 6 to 92 (NKLYLQAQAY…VLRQWFAYLV (87 aa)). Residues 113–292 (HLPKNIDAER…DFQHLAKIYD (180 aa)) enclose the Tyr recombinase domain. Residues Arg152, Lys176, His244, Arg247, and His270 contribute to the active site. The O-(3'-phospho-DNA)-tyrosine intermediate role is filled by Tyr279.

The protein belongs to the 'phage' integrase family. XerC subfamily. As to quaternary structure, forms a cyclic heterotetrameric complex composed of two molecules of XerC and two molecules of XerD.

It is found in the cytoplasm. Site-specific tyrosine recombinase, which acts by catalyzing the cutting and rejoining of the recombining DNA molecules. The XerC-XerD complex is essential to convert dimers of the bacterial chromosome into monomers to permit their segregation at cell division. It also contributes to the segregational stability of plasmids. This Haemophilus ducreyi (strain 35000HP / ATCC 700724) protein is Tyrosine recombinase XerC.